The sequence spans 211 residues: Phosphoribosyl-dephospho-CoA transferase (211 aa).

Active-site residues include Asp136 and Asp138.

It belongs to the MdcG family.

It catalyses the reaction apo-[malonate decarboxylase ACP] + 2'-(5''-triphospho-alpha-D-ribosyl)-3'-dephospho-CoA = holo-[malonate decarboxylase ACP] + diphosphate. Functionally, transfers 2'-(5-triphosphoribosyl)-3'-dephosphocoenzyme-A to the apo-[acyl-carrier-protein] of the malonate decarboxylase to yield holo-[acyl-carrier-protein]. In Pseudomonas syringae pv. tomato (strain ATCC BAA-871 / DC3000), this protein is Phosphoribosyl-dephospho-CoA transferase.